An 825-amino-acid polypeptide reads, in one-letter code: Breast cancer anti-estrogen resistance protein 3 homolog (825 aa).

The residue at position 2 (Ala-2) is an N-acetylalanine. The tract at residues 31-93 is disordered; the sequence is KSPLTEHRPD…PVTQDSIQES (63 aa). Phosphoserine occurs at positions 32, 78, 83, 182, and 290. The segment covering 75–93 has biased composition (polar residues); it reads HSKSPQQNSPVTQDSIQES. An SH2 domain is found at 154 to 253; sequence WYHGRIPRQV…QSGAIIFQPI (100 aa). Lys-334 carries the post-translational modification N6-methyllysine. Phosphoserine occurs at positions 358, 363, and 375. Residue Arg-442 is modified to Omega-N-methylarginine. Residue Ser-471 is modified to Phosphoserine. In terms of domain architecture, Ras-GEF spans 548 to 818; that stretch reads DPKVIAQHIL…TALSRKLEPP (271 aa). A mediates the interaction with BCAR1/p130CAS region spans residues 744-748; it reads LATAR.

Part of a complex comprised of PTPRA, BCAR1, BCAR3 (via SH2 domain) and SRC; the formation of the complex is dependent on integrin mediated-tyrosine phosphorylation of PTPRA. Within the complex, interacts (via SH2 domain) with PTPRA (when phosphorylated on 'Tyr-798'). Interacts (via Ras-GEF domain) with BCAR1. Interacts (via Ras-GEF domain) with NEDD9. Interacts with PTK2/FAK1. Interacts with PTPN1. Interacts (via SH2 domain) with EGFR (when tyrosine-phosphorylated). Post-translationally, phosphorylated on tyrosine residues.

It is found in the cytoplasm. The protein resides in the cell junction. Its subcellular location is the focal adhesion. Its function is as follows. Acts as an adapter protein downstream of several growth factor receptors to promote cell proliferation, migration, and redistribution of actin fibers. Specifically involved in INS/insulin signaling pathway by mediating MAPK1/ERK2-MAPK3/ERK1 activation and DNA synthesis. Promotes insulin-mediated membrane ruffling. In response to vasoconstrictor peptide EDN1, involved in the activation of RAP1 downstream of PTK2B via interaction with phosphorylated BCAR1. Inhibits cell migration and invasion via regulation of TGFB-mediated matrix digestion, actin filament rearrangement, and inhibition of invadopodia activity. May inhibit TGFB-SMAD signaling, via facilitating BCAR1 and SMAD2 and/or SMAD3 interaction. Regulates EGF-induced DNA synthesis. Required for the maintenance of ocular lens morphology and structural integrity, potentially via regulation of focal adhesion complex signaling. Acts upstream of PTPRA to regulate the localization of BCAR1 and PTPRA to focal adhesions, via regulation of SRC-mediated phosphorylation of PTPRA. Positively regulates integrin-induced tyrosine phosphorylation of BCAR1. Acts as a guanine nucleotide exchange factor (GEF) for small GTPases RALA, RAP1A and RRAS. However, in a contrasting study, lacks GEF activity towards RAP1. In Macaca fascicularis (Crab-eating macaque), this protein is Breast cancer anti-estrogen resistance protein 3 homolog (BCAR3).